Reading from the N-terminus, the 1690-residue chain is MPMSSFKRKIKAIQIKIASPEVIRSWSGGEVKKPETINYRTFKPERDGLFCERIFGPVKDYECACGKYKGKKYEGTVCERCGVRVESREARRKRMGHIELAAPAVHIWYLESIPSVLGTLLNMSTSDLENIIYYGSRRVIERAFIVTDPKDTPFSQGDVIYETEYRIYRKKWDFEVEQAFVVKNPKSPVLSDIDGEVTLKTEKSITGREITWIIVKNITRATHTVLPGMILVVKDGQEVEKGQDLTKEMTIDPVYAPFDGHVEIDELSNTITLKPLTTSKDQPVVFTAPYGAKILVSNGQKVKKGDQITTSTSLPSVKSSISGTVRFGSNLNIRALEDGNFEVLSTGEVYVEQVIEERKYPVFEGALVYVNNGDQVKKGDHLADRFLFEEEYLSATEYKIFESHYPTMFDVEERTENDRPIVVITDIDPEVSKETGLKVGDIVTENEYEAYLQIYPEKIVADAGAQAIKKLLQNLDLEALQAEIEAELKKLPSSSSKAIKLRRRLKMVKDFLKSGNKPEWMVLEVVPVIPPDLRPMIQIEGGRFATTDLNELYRRLINRNNRLKKLLELGAPEIILRNEKRMLQEAVDALIHNGSDSEGKRSRRAVLKDRNGRPLKSLTDLLKGKKGRFRRNLLGKRVDYSGRAVIVVGPHLKIHQCGIPKKMAMELFKPFVLAKLLGEGSSSKTMRKVKKAIIEKEMPEAWEVLEEVIKGSVVLLNRAPTLHRMSIQAFEPKLVEGNAIQLHPVVCPPFNADFDGDQMAVHVPLSAAAQAEARFLMLSRYNIISPAHGKPISLPTQDIIIGSYYLTTVSKEFDSLKEEDVKWKFSSPEEAMLAYHLGFIKLHTPILIKVVINGEEKRIKTTLGRVIFNSILPEDLRDYNRIFDKKQINTLVYETFKRHGIDRAADLLDDIKDIGFHYATVSGLTLSLKDLKIPPERDEILRKTWEKVRIIEENYEKGFLTEEQRKSEIIRLWMSVTEEITKLTSRTLAEDPFNPIYMMVNSGARGNIDQVKQLAGIRGLMIKAYDPRSREIKSKIFKGQAIHEALTFDYPVDKNLREGVDILQFFISTYGARKGQVDTAMNTSFAGYLTRRLVDVAQSVTVAEPDCGTHEGIRAMDLIKEGTVVEKMNEFLFGRVLAKDVLDPETKEVLKNPETGKEYTRNTMLTDDDANFLASYKKMVDVVRYEEIDITELSLPNMYAEIAEPVGEYEEGTELTWDVVKAAKNEGKYRIKVKVYPVVGTVYAEEEPLYDKKGERQLLVYQEVINEIVAKMLEENGIEKVPVRPDIIVRSPLTCESEYGVCAACYGMDLSNHKIVNVGESVGIVAAQSIGEPGTQLTMRTFHVGGVMGASDIVSGLTTVEKTFEPYAFLREEKSGGKKEIRKYYGSESILCEVDGFVKDIATDESGRTVIYVEDYAGNIHAYKVPKRAKVRVEKGQKVLRGETLTSGAIVWWKLLELESEKGVMTAMNLLKIIKNAYVQQGVSIHDKHFEIIFKQMLSMATIVDPGDSDYLPDQLVPLVDIKRFNREILEGNAKVEENRKWVIGKTLAKRIIAETEEGELVELAQKGDEVTEELLKKIIEAGIKEIDVFEKDKVVTYQILPKEPIKYKRRLLSLKKAALNYPGWLSAAAFEETAWVLTAAAIEGKVDPLIGLKENVIVGQLIPSGTGLDVFAGIQVEETPRAAVEEELA.

Positions 63, 65, 78, and 81 each coordinate Zn(2+). Residues Asp-753, Asp-755, and Asp-757 each coordinate Mg(2+). Residues Cys-1107, Cys-1295, Cys-1302, and Cys-1305 each coordinate Zn(2+).

This sequence belongs to the RNA polymerase beta' chain family. As to quaternary structure, the RNAP catalytic core consists of 2 alpha, 1 beta, 1 beta' and 1 omega subunit. When a sigma factor is associated with the core the holoenzyme is formed, which can initiate transcription. The cofactor is Mg(2+). Requires Zn(2+) as cofactor.

It carries out the reaction RNA(n) + a ribonucleoside 5'-triphosphate = RNA(n+1) + diphosphate. Its function is as follows. DNA-dependent RNA polymerase catalyzes the transcription of DNA into RNA using the four ribonucleoside triphosphates as substrates. The protein is DNA-directed RNA polymerase subunit beta' of Thermotoga petrophila (strain ATCC BAA-488 / DSM 13995 / JCM 10881 / RKU-1).